The primary structure comprises 184 residues: NADH-quinone oxidoreductase subunit B 2 (184 aa).

[4Fe-4S] cluster contacts are provided by C59, C60, C125, and C153.

This sequence belongs to the complex I 20 kDa subunit family. NDH-1 is composed of 14 different subunits. Subunits NuoB, C, D, E, F, and G constitute the peripheral sector of the complex. Requires [4Fe-4S] cluster as cofactor.

The protein localises to the cell inner membrane. The catalysed reaction is a quinone + NADH + 5 H(+)(in) = a quinol + NAD(+) + 4 H(+)(out). NDH-1 shuttles electrons from NADH, via FMN and iron-sulfur (Fe-S) centers, to quinones in the respiratory chain. Couples the redox reaction to proton translocation (for every two electrons transferred, four hydrogen ions are translocated across the cytoplasmic membrane), and thus conserves the redox energy in a proton gradient. This is NADH-quinone oxidoreductase subunit B 2 from Solibacter usitatus (strain Ellin6076).